The chain runs to 167 residues: NADH-quinone oxidoreductase subunit I (167 aa).

2 4Fe-4S ferredoxin-type domains span residues 59 to 88 and 98 to 127; these read RKYKNGEERCIACKLCEAICPAQAITIEAQ and VRYDIDMTKCIYCGFCQEACPVDAIVEGPN. Positions 68, 71, 74, 78, 107, 110, 113, and 117 each coordinate [4Fe-4S] cluster.

It belongs to the complex I 23 kDa subunit family. As to quaternary structure, NDH-1 is composed of 14 different subunits. Subunits NuoA, H, J, K, L, M, N constitute the membrane sector of the complex. Requires [4Fe-4S] cluster as cofactor.

The protein resides in the cell inner membrane. It carries out the reaction a quinone + NADH + 5 H(+)(in) = a quinol + NAD(+) + 4 H(+)(out). Functionally, NDH-1 shuttles electrons from NADH, via FMN and iron-sulfur (Fe-S) centers, to quinones in the respiratory chain. The immediate electron acceptor for the enzyme in this species is believed to be ubiquinone. Couples the redox reaction to proton translocation (for every two electrons transferred, four hydrogen ions are translocated across the cytoplasmic membrane), and thus conserves the redox energy in a proton gradient. The chain is NADH-quinone oxidoreductase subunit I from Ehrlichia canis (strain Jake).